The chain runs to 331 residues: Aspartate carbamoyltransferase catalytic subunit (331 aa).

Residues Arg-76 and Thr-77 each contribute to the carbamoyl phosphate site. L-aspartate is bound at residue Lys-104. Carbamoyl phosphate is bound by residues Arg-126, His-154, and Gln-157. The L-aspartate site is built by Arg-187 and Arg-246. Carbamoyl phosphate is bound by residues Gly-287 and Pro-288.

It belongs to the aspartate/ornithine carbamoyltransferase superfamily. ATCase family. Heterododecamer (2C3:3R2) of six catalytic PyrB chains organized as two trimers (C3), and six regulatory PyrI chains organized as three dimers (R2).

The enzyme catalyses carbamoyl phosphate + L-aspartate = N-carbamoyl-L-aspartate + phosphate + H(+). It participates in pyrimidine metabolism; UMP biosynthesis via de novo pathway; (S)-dihydroorotate from bicarbonate: step 2/3. Catalyzes the condensation of carbamoyl phosphate and aspartate to form carbamoyl aspartate and inorganic phosphate, the committed step in the de novo pyrimidine nucleotide biosynthesis pathway. This is Aspartate carbamoyltransferase catalytic subunit from Dehalococcoides mccartyi (strain ATCC BAA-2100 / JCM 16839 / KCTC 5957 / BAV1).